We begin with the raw amino-acid sequence, 285 residues long: NAD kinase (285 aa).

Residue Asp-66 is the Proton acceptor of the active site. Residues 66–67 (DG), 137–138 (ND), Arg-148, Arg-165, Asp-167, and 178–183 (TAYSMS) each bind NAD(+).

This sequence belongs to the NAD kinase family. Requires a divalent metal cation as cofactor.

It localises to the cytoplasm. The catalysed reaction is NAD(+) + ATP = ADP + NADP(+) + H(+). Functionally, involved in the regulation of the intracellular balance of NAD and NADP, and is a key enzyme in the biosynthesis of NADP. Catalyzes specifically the phosphorylation on 2'-hydroxyl of the adenosine moiety of NAD to yield NADP. This Chlorobium luteolum (strain DSM 273 / BCRC 81028 / 2530) (Pelodictyon luteolum) protein is NAD kinase.